We begin with the raw amino-acid sequence, 367 residues long: MLEFPLINDTSRKIIHIDMDAFFAQVEMRDDPSLKDKPVIIGNDPRKTGGRGVVSTCNYEARKYGVHSAMSSKEAYERCPNAVFISGNYSHYREVGMQIREIFKCYTDLVEPMSIDEAYLDVTTNKLGIKSAVKVAKLIQYDIWQELHLTCSAGVSYNKFIAKLASDFQKPAGLTVVLPEEAQDFLEKLPIEKFHGVGKKSVERLHDMDIYTGADLLKISEITLIDRFGRFGFDLFRKARGISNSPVKPNRVRKSIGSERTYGKLLYSEDDIKAELTKNAKQVAESAQKAKKVGRIIVIKVRYSDFSTLTKRMTLDKSTQDFDTIDRISHSIFDQLEENSSGVRLLGVTLTGLEDQEGRQLDLDDLA.

One can recognise a UmuC domain in the interval 14–198 (IIHIDMDAFF…LPIEKFHGVG (185 aa)). Positions 18 and 116 each coordinate Mg(2+). E117 is a catalytic residue.

It belongs to the DNA polymerase type-Y family. In terms of assembly, monomer. Mg(2+) is required as a cofactor.

It is found in the cytoplasm. The catalysed reaction is DNA(n) + a 2'-deoxyribonucleoside 5'-triphosphate = DNA(n+1) + diphosphate. Its function is as follows. Poorly processive, error-prone DNA polymerase involved in untargeted mutagenesis. Copies undamaged DNA at stalled replication forks, which arise in vivo from mismatched or misaligned primer ends. These misaligned primers can be extended by PolIV. Exhibits no 3'-5' exonuclease (proofreading) activity. May be involved in translesional synthesis, in conjunction with the beta clamp from PolIII. The sequence is that of DNA polymerase IV from Streptococcus thermophilus (strain CNRZ 1066).